Consider the following 232-residue polypeptide: Vesicle transport through interaction with t-SNAREs homolog 1B (232 aa).

N-acetylalanine is present on A2. Interaction with CLINT1 regions lie at residues 2-23 (AASA…GLLE) and 69-73 (APLTF). The Cytoplasmic portion of the chain corresponds to 2 to 208 (AASAASSEHF…SRKVITNKLL (207 aa)). A coiled-coil region spans residues 36–98 (AGTEEKKKLV…AKLHREVRST (63 aa)). R107 is modified (omega-N-methylarginine). S138 carries the post-translational modification Phosphoserine. Positions 160–201 (GTEIIEELGEQRDQLERTKSRLVNTNENLSKSRKILRSMSRK) form a coiled coil. A helical; Anchor for type IV membrane protein membrane pass occupies residues 209–229 (LSVIILLELAILVGLVYYKFF). Topologically, residues 230–232 (RHH) are vesicular.

Belongs to the VTI1 family. Forms a SNARE complex with STX7, STX8 and VAMP8 which functions in the homotypic fusion of late endosomes. Component of the SNARE complex composed of STX7, STX8, VAMP7 and VIT1B that is required for heterotypic fusion of late endosomes with lysosomes. May interact with STX17. Interacts with CLINT1. Broadly expressed.

It localises to the early endosome membrane. The protein resides in the late endosome membrane. It is found in the lysosome membrane. The protein localises to the cytoplasmic granule. Its subcellular location is the recycling endosome membrane. Functionally, V-SNARE that mediates vesicle transport pathways through interactions with t-SNAREs on the target membrane. These interactions are proposed to mediate aspects of the specificity of vesicle trafficking and to promote fusion of the lipid bilayers. The sequence is that of Vesicle transport through interaction with t-SNAREs homolog 1B (Vti1b) from Mus musculus (Mouse).